The sequence spans 1446 residues: Centrosomal protein of 164 kDa (1446 aa).

Positions 1–195 are interaction with ATRIP; it reads MARRPILLGD…PPQGLKAAAC (195 aa). Residues 56–89 form the WW domain; it reads APLPKGWKPCQNITGDLYYFNFDTGQSIWDHPCD. Disordered regions lie at residues 106 to 132 and 159 to 185; these read PGAI…SKSP and PPSA…EPTL. Positions 109–121 are enriched in basic residues; it reads IKKKDKKKKKEKK. A compositionally biased stretch (polar residues) spans 164–176; the sequence is RGSQSVSLGSSAD. Residue S202 is modified to Phosphoserine. Disordered regions lie at residues 217–238, 250–408, 424–570, and 830–849; these read EETN…SSEL, GGNF…SFLG, GDTL…EPAA, and KRQE…KEEH. The segment covering 218–228 has biased composition (acidic residues); it reads ETNEEDEEESD. Residues 257-277 are compositionally biased toward basic and acidic residues; that stretch reads ESPRTSQPDKKDVSLDSDADR. Residues 288–312 are compositionally biased toward polar residues; sequence GADSSVASANGSKSQGRGASPWNPQ. 2 stretches are compositionally biased toward basic and acidic residues: residues 355-372 and 384-397; these read KEGE…KEAS and SEIH…RHSG. The span at 451 to 461 shows a compositional bias: polar residues; sequence SSIAEPQSKHT. 2 stretches are compositionally biased toward basic and acidic residues: residues 490 to 499 and 525 to 534; these read PEWKEAEGPG and ERAEEKHSQA. Residues 1143–1197 adopt a coiled-coil conformation; that stretch reads EVLGNMRKNLNEETRHLDEMKSAMRKGHDLLKKKEEKLIQLESSLQEEVSDEDTL. The interval 1261–1287 is disordered; that stretch reads LGSLNSQPPPQGLGSQPPPPLFTSSLR. Over residues 1267–1281 the composition is skewed to pro residues; sequence QPPPQGLGSQPPPPL. 2 positions are modified to phosphoserine: S1369 and S1371.

As to quaternary structure, interacts (via N-terminus) with ATRIP. Interacts with ATM, ATR and MDC1. Interacts with XPA (via N-terminus) upon UV irradiation. Interacts with CEP83, CCDC92, TTBK2, DVL3, NPHP3 and weakly with NPHP4. Interacts with DZIP1.

Its subcellular location is the cytoplasm. It is found in the cytoskeleton. It localises to the microtubule organizing center. The protein resides in the centrosome. The protein localises to the centriole. Its subcellular location is the nucleus. In terms of biological role, plays a role in microtubule organization and/or maintenance for the formation of primary cilia (PC), a microtubule-based structure that protrudes from the surface of epithelial cells. Plays a critical role in G2/M checkpoint and nuclear divisions. A key player in the DNA damage-activated ATR/ATM signaling cascade since it is required for the proper phosphorylation of H2AX, RPA, CHEK2 and CHEK1. Plays a critical role in chromosome segregation, acting as a mediator required for the maintenance of genomic stability through modulation of MDC1, RPA and CHEK1. The protein is Centrosomal protein of 164 kDa of Mus musculus (Mouse).